Reading from the N-terminus, the 199-residue chain is Thymidine kinase (199 aa).

Residues 23 to 30 and 95 to 98 contribute to the ATP site; these read GSMFSGKT and DEAQ. The Proton acceptor role is filled by E96. Zn(2+) contacts are provided by C152, C155, C184, and C187.

Belongs to the thymidine kinase family. Homotetramer.

It is found in the cytoplasm. The catalysed reaction is thymidine + ATP = dTMP + ADP + H(+). This chain is Thymidine kinase, found in Bacteroides fragilis (strain ATCC 25285 / DSM 2151 / CCUG 4856 / JCM 11019 / LMG 10263 / NCTC 9343 / Onslow / VPI 2553 / EN-2).